The following is a 632-amino-acid chain: Eukaryotic peptide chain release factor GTP-binding subunit ERF3B (632 aa).

Disordered regions lie at residues 1-31 (MDLGSSSDSAPDCWDQVDMEAPGSAPSGDGI) and 162-200 (SEAKPEASLGDAGPPEESVKEVMEEKEEVRKSKSVSIPS). Residues 178–192 (ESVKEVMEEKEEVRK) show a composition bias toward basic and acidic residues. The 225-residue stretch at 205–429 (KEHVNVVFIG…YLDSLPNFNR (225 aa)) folds into the tr-type G domain. Residues 214-221 (GHVDAGKS) form a G1 region. 217 to 222 (DAGKST) serves as a coordination point for GTP. Residues 270–274 (GKTVE) form a G2 region. Residues 291 to 294 (DAPG) are G3. GTP-binding positions include 353–356 (NKMD) and 395–397 (SGL). The G4 stretch occupies residues 353–356 (NKMD). The segment at 395 to 397 (SGL) is G5.

This sequence belongs to the TRAFAC class translation factor GTPase superfamily. Classic translation factor GTPase family. ERF3 subfamily. As to quaternary structure, component of the eRF1-eRF3-GTP ternary complex, composed of ETF1/ERF1 and ERF3 (GSPT1/ERF3A or GSPT2/ERF3B) and GTP. Component of the transient SURF (SMG1-UPF1-eRF1-eRF3) complex. Interacts with UPF1 and PABPC1. Highly expressed in brain. Moderately expressed in spleen and lung. Weakly expressed in heart, liver and kidney. Expression during the cell-cycle progression is constant.

It is found in the cytoplasm. The enzyme catalyses GTP + H2O = GDP + phosphate + H(+). GTPase component of the eRF1-eRF3-GTP ternary complex, a ternary complex that mediates translation termination in response to the termination codons UAA, UAG and UGA. GSPT2/ERF3B mediates ETF1/ERF1 delivery to stop codons: The eRF1-eRF3-GTP complex binds to a stop codon in the ribosomal A-site. GTP hydrolysis by GSPT2/ERF3B induces a conformational change that leads to its dissociation, permitting ETF1/ERF1 to accommodate fully in the A-site. Component of the transient SURF complex which recruits UPF1 to stalled ribosomes in the context of nonsense-mediated decay (NMD) of mRNAs containing premature stop codons. The polypeptide is Eukaryotic peptide chain release factor GTP-binding subunit ERF3B (Gspt2) (Mus musculus (Mouse)).